The primary structure comprises 375 residues: tRNA-specific 2-thiouridylase MnmA (375 aa).

ATP is bound by residues 8–15 and methionine 34; that span reads GLSGGVDS. Residues 104–106 are interaction with target base in tRNA; it reads NPD. The active-site Nucleophile is cysteine 109. Cysteines 109 and 208 form a disulfide. Residue glycine 134 participates in ATP binding. The interval 158-160 is interaction with tRNA; that stretch reads KDQ. Cysteine 208 serves as the catalytic Cysteine persulfide intermediate. Positions 321-322 are interaction with tRNA; that stretch reads RY.

It belongs to the MnmA/TRMU family.

It localises to the cytoplasm. It catalyses the reaction S-sulfanyl-L-cysteinyl-[protein] + uridine(34) in tRNA + AH2 + ATP = 2-thiouridine(34) in tRNA + L-cysteinyl-[protein] + A + AMP + diphosphate + H(+). Its function is as follows. Catalyzes the 2-thiolation of uridine at the wobble position (U34) of tRNA, leading to the formation of s(2)U34. The chain is tRNA-specific 2-thiouridylase MnmA from Mycoplasma mycoides subsp. mycoides SC (strain CCUG 32753 / NCTC 10114 / PG1).